We begin with the raw amino-acid sequence, 148 residues long: Urease accessory protein UreE (148 aa).

It belongs to the UreE family.

It is found in the cytoplasm. Functionally, involved in urease metallocenter assembly. Binds nickel. Probably functions as a nickel donor during metallocenter assembly. This Geobacillus kaustophilus (strain HTA426) protein is Urease accessory protein UreE.